A 569-amino-acid chain; its full sequence is Glycylpeptide N-tetradecanoyltransferase (569 aa).

Basic and acidic residues predominate over residues 1-18 (MPPTEESKPVDPAQEKQA). Residues 1 to 82 (MPPTEESKPV…STESSAEVGL (82 aa)) are disordered. The segment covering 55–68 (TKKKNKKKSKKKNK) has biased composition (basic residues). Tetradecanoyl-CoA contacts are provided by residues 158–161 (YKFW), 291–293 (LCI), and 299–303 (GKRLA). Residue Val569 is the Proton acceptor; via carboxylate of the active site.

This sequence belongs to the NMT family. Monomer.

It localises to the cytoplasm. It carries out the reaction N-terminal glycyl-[protein] + tetradecanoyl-CoA = N-tetradecanoylglycyl-[protein] + CoA + H(+). Adds a myristoyl group to the N-terminal glycine residue of certain cellular proteins. The sequence is that of Glycylpeptide N-tetradecanoyltransferase (gtt-1) from Neurospora crassa (strain ATCC 24698 / 74-OR23-1A / CBS 708.71 / DSM 1257 / FGSC 987).